The primary structure comprises 265 residues: Type III pantothenate kinase (265 aa).

ATP is bound at residue 17–24 (DIGNTSIS). A substrate-binding site is contributed by 114-117 (GSDV). Asp116 serves as the catalytic Proton acceptor. Asp137 is a binding site for K(+). Residue Thr140 coordinates ATP. Residue Thr192 coordinates substrate.

Belongs to the type III pantothenate kinase family. Homodimer. NH4(+) serves as cofactor. Requires K(+) as cofactor.

Its subcellular location is the cytoplasm. It carries out the reaction (R)-pantothenate + ATP = (R)-4'-phosphopantothenate + ADP + H(+). It functions in the pathway cofactor biosynthesis; coenzyme A biosynthesis; CoA from (R)-pantothenate: step 1/5. Its function is as follows. Catalyzes the phosphorylation of pantothenate (Pan), the first step in CoA biosynthesis. The polypeptide is Type III pantothenate kinase (Borrelia hermsii (strain HS1 / DAH)).